Reading from the N-terminus, the 144-residue chain is Putative protein PHLOEM PROTEIN 2-LIKE B4 (144 aa).

The sequence is that of Putative protein PHLOEM PROTEIN 2-LIKE B4 (PP2B4) from Arabidopsis thaliana (Mouse-ear cress).